The sequence spans 104 residues: Cytochrome c6 (104 aa).

Positions 1-20 (MKSLLTFILTTIFCIQQVWA) are cleaved as a signal peptide. Positions 34, 37, 38, and 78 each coordinate heme c.

Belongs to the cytochrome c family. PetJ subfamily. Monomer. Post-translationally, binds 1 heme c group covalently per subunit.

Its subcellular location is the plastid. It localises to the chloroplast thylakoid lumen. In terms of biological role, functions as an electron carrier between membrane-bound cytochrome b6-f and photosystem I in oxygenic photosynthesis. The polypeptide is Cytochrome c6 (Cyanidioschyzon merolae (strain NIES-3377 / 10D) (Unicellular red alga)).